Consider the following 96-residue polypeptide: Aspartyl/glutamyl-tRNA(Asn/Gln) amidotransferase subunit C (96 aa).

The protein belongs to the GatC family. In terms of assembly, heterotrimer of A, B and C subunits.

The catalysed reaction is L-glutamyl-tRNA(Gln) + L-glutamine + ATP + H2O = L-glutaminyl-tRNA(Gln) + L-glutamate + ADP + phosphate + H(+). It carries out the reaction L-aspartyl-tRNA(Asn) + L-glutamine + ATP + H2O = L-asparaginyl-tRNA(Asn) + L-glutamate + ADP + phosphate + 2 H(+). Its function is as follows. Allows the formation of correctly charged Asn-tRNA(Asn) or Gln-tRNA(Gln) through the transamidation of misacylated Asp-tRNA(Asn) or Glu-tRNA(Gln) in organisms which lack either or both of asparaginyl-tRNA or glutaminyl-tRNA synthetases. The reaction takes place in the presence of glutamine and ATP through an activated phospho-Asp-tRNA(Asn) or phospho-Glu-tRNA(Gln). In Trichormus variabilis (strain ATCC 29413 / PCC 7937) (Anabaena variabilis), this protein is Aspartyl/glutamyl-tRNA(Asn/Gln) amidotransferase subunit C.